The chain runs to 512 residues: UDP-N-acetylmuramate--L-alanine ligase (512 aa).

132–138 serves as a coordination point for ATP; that stretch reads GAHGKTT.

The protein belongs to the MurCDEF family.

It is found in the cytoplasm. It catalyses the reaction UDP-N-acetyl-alpha-D-muramate + L-alanine + ATP = UDP-N-acetyl-alpha-D-muramoyl-L-alanine + ADP + phosphate + H(+). Its pathway is cell wall biogenesis; peptidoglycan biosynthesis. Functionally, cell wall formation. This chain is UDP-N-acetylmuramate--L-alanine ligase, found in Bifidobacterium longum subsp. infantis (strain ATCC 15697 / DSM 20088 / JCM 1222 / NCTC 11817 / S12).